A 103-amino-acid chain; its full sequence is Putative inactive recombination-promoting nuclease-like protein YjiP (103 aa).

The protein belongs to the Rpn/YhgA-like nuclease family.

Its function is as follows. This pseudogene is the N-terminal fragment of low activity DNA endonuclease RpnD which probably yields 3'-hydroxyl ends. The intact protein can be seen in this entry (AC B7NGZ6). Expression of the repaired protein increases the frequency of recA-independent recombination, but also decreases viability probably via DNA damage; in a RecA strain expression has no effect on viability but does induce the SOS repair response. May play a role in horizontal gene transfer. The protein is Putative inactive recombination-promoting nuclease-like protein YjiP (yjiP) of Escherichia coli (strain K12).